Reading from the N-terminus, the 132-residue chain is Fatty acid-binding protein 1 (132 aa).

An N-acetylalanine modification is found at alanine 2.

The protein belongs to the calycin superfamily. Fatty-acid binding protein (FABP) family.

In Fasciola gigantica (Giant liver fluke), this protein is Fatty acid-binding protein 1 (FABP-1).